The following is a 244-amino-acid chain: MTNQKKKEMVQTFQNKFEKKMQELNLDFNRVDLYQQAFSHSSFINDFNMNRLDHNERLEFLGDAVLELTVSRYLFDKYPELPEGNLTKMRATIVCEPSLVIFANKIQLNDLILLGKGEEKTGGRTRPSLVSDAFEAFVGALYLDQGLEAVWQFSEQIIFPYVEDDELDGVVDFKTQFQEYVHRQNKGDVTYRLINEEGPAHHRLFTSEVILEEDAVAEGKGKTKKESEQKAAERAYKILKNKNA.

The region spanning 17-146 (FEKKMQELNL…FVGALYLDQG (130 aa)) is the RNase III domain. Glu-59 serves as a coordination point for Mg(2+). The active site involves Asp-63. The Mg(2+) site is built by Asp-132 and Glu-135. Residue Glu-135 is part of the active site. Residues 172 to 241 (DFKTQFQEYV…AERAYKILKN (70 aa)) enclose the DRBM domain.

This sequence belongs to the ribonuclease III family. Homodimer. Mg(2+) is required as a cofactor.

It localises to the cytoplasm. The catalysed reaction is Endonucleolytic cleavage to 5'-phosphomonoester.. Digests double-stranded RNA. Involved in the processing of primary rRNA transcript to yield the immediate precursors to the large and small rRNAs (23S and 16S). Processes some mRNAs, and tRNAs when they are encoded in the rRNA operon. Processes pre-crRNA and tracrRNA of type II CRISPR loci if present in the organism. In Staphylococcus saprophyticus subsp. saprophyticus (strain ATCC 15305 / DSM 20229 / NCIMB 8711 / NCTC 7292 / S-41), this protein is Ribonuclease 3.